Consider the following 220-residue polypeptide: Sericin-2 (220 aa).

Low complexity-rich tracts occupy residues 1-131 (SSST…ASSS) and 141-155 (NESS…QNSA). A disordered region spans residues 1 to 220 (SSSTNNSSGS…SSSSSSWSSA (220 aa)). Polar residues predominate over residues 156–165 (TRSQVINADG). Positions 166 to 220 (SQSSSSSSSSASNQASATSSSSVSADGSESESSSSSSSSSSSSSESSSSSSWSSA) are enriched in low complexity.

As to expression, produced exclusively in the middle (MSG) section of silk glands.

It is found in the secreted. Functionally, provides the silk fibroin thread with a sticky coating. Acts as a cement by sticking silk threads together. The sequence is that of Sericin-2 (SER2) from Galleria mellonella (Greater wax moth).